A 493-amino-acid polypeptide reads, in one-letter code: Cysteine--tRNA ligase (493 aa).

Position 29 (cysteine 29) interacts with Zn(2+). Residues 31–41 (VTVYDLCHLGH) carry the 'HIGH' region motif. Positions 213, 238, and 242 each coordinate Zn(2+). The short motif at 270–274 (KMSKS) is the 'KMSKS' region element. Lysine 273 provides a ligand contact to ATP.

Belongs to the class-I aminoacyl-tRNA synthetase family. Monomer. The cofactor is Zn(2+).

The protein localises to the cytoplasm. The enzyme catalyses tRNA(Cys) + L-cysteine + ATP = L-cysteinyl-tRNA(Cys) + AMP + diphosphate. The chain is Cysteine--tRNA ligase from Parasynechococcus marenigrum (strain WH8102).